A 373-amino-acid chain; its full sequence is 4-hydroxy-3-methylbut-2-en-1-yl diphosphate synthase (flavodoxin) (373 aa).

Positions 270, 273, 305, and 312 each coordinate [4Fe-4S] cluster.

It belongs to the IspG family. [4Fe-4S] cluster serves as cofactor.

The catalysed reaction is (2E)-4-hydroxy-3-methylbut-2-enyl diphosphate + oxidized [flavodoxin] + H2O + 2 H(+) = 2-C-methyl-D-erythritol 2,4-cyclic diphosphate + reduced [flavodoxin]. The protein operates within isoprenoid biosynthesis; isopentenyl diphosphate biosynthesis via DXP pathway; isopentenyl diphosphate from 1-deoxy-D-xylulose 5-phosphate: step 5/6. In terms of biological role, converts 2C-methyl-D-erythritol 2,4-cyclodiphosphate (ME-2,4cPP) into 1-hydroxy-2-methyl-2-(E)-butenyl 4-diphosphate. The protein is 4-hydroxy-3-methylbut-2-en-1-yl diphosphate synthase (flavodoxin) of Vibrio atlanticus (strain LGP32) (Vibrio splendidus (strain Mel32)).